A 25-amino-acid chain; its full sequence is Glucomannokinase (25 aa).

This sequence belongs to the ROK (NagC/XylR) family. As to quaternary structure, homodimer.

It catalyses the reaction D-glucose + ATP = D-glucose 6-phosphate + ADP + H(+). The catalysed reaction is D-mannose + ATP = D-mannose 6-phosphate + ADP + H(+). Its pathway is carbohydrate degradation; glycolysis; D-glyceraldehyde 3-phosphate and glycerone phosphate from D-glucose: step 1/4. It functions in the pathway carbohydrate metabolism; mannose metabolism. With respect to regulation, competitively inhibited by 2-deoxy-glucose. Its function is as follows. The enzyme has great affinity for glucose and mannose. This Segatella bryantii (Prevotella bryantii) protein is Glucomannokinase.